Consider the following 216-residue polypeptide: Adenylate kinase (216 aa).

10-15 (GAGKGT) serves as a coordination point for ATP. The segment at 30 to 59 (STGDIFRYNIKQGTELGKKAKSYMDQGLLV) is NMP. Residues threonine 31, arginine 36, 57 to 59 (LLV), 85 to 88 (GFPR), and glutamine 92 contribute to the AMP site. Positions 126–163 (GRRICRECGATFHVQYNPSTKGALCDQCGGELYQRDDD) are LID. Arginine 127 is an ATP binding site. 2 residues coordinate Zn(2+): cysteine 130 and cysteine 133. An ATP-binding site is contributed by 136–137 (TF). Residues cysteine 150 and cysteine 153 each contribute to the Zn(2+) site. Arginine 160 and arginine 171 together coordinate AMP. Residue lysine 199 participates in ATP binding.

It belongs to the adenylate kinase family. Monomer.

The protein resides in the cytoplasm. It carries out the reaction AMP + ATP = 2 ADP. The protein operates within purine metabolism; AMP biosynthesis via salvage pathway; AMP from ADP: step 1/1. Catalyzes the reversible transfer of the terminal phosphate group between ATP and AMP. Plays an important role in cellular energy homeostasis and in adenine nucleotide metabolism. The polypeptide is Adenylate kinase (Alkaliphilus oremlandii (strain OhILAs) (Clostridium oremlandii (strain OhILAs))).